A 277-amino-acid chain; its full sequence is 4-hydroxy-tetrahydrodipicolinate reductase (277 aa).

9–14 provides a ligand contact to NAD(+); the sequence is GATGRM. Lys37 contributes to the NADP(+) binding site. 75–77 serves as a coordination point for NAD(+); that stretch reads GTS. His132 serves as the catalytic Proton donor/acceptor. The Proton donor role is filled by Lys136. 142 to 143 provides a ligand contact to (S)-2,3,4,5-tetrahydrodipicolinate; sequence GT. Disordered regions lie at residues 154–173 and 247–277; these read ARGARGPVQAPHTDQRARGQ and ERAAQAAAGDAPSGPVDDGGPSGQAATVTSA. Residues 250-265 are compositionally biased toward low complexity; sequence AQAAAGDAPSGPVDDG.

This sequence belongs to the DapB family.

It is found in the cytoplasm. It carries out the reaction (S)-2,3,4,5-tetrahydrodipicolinate + NAD(+) + H2O = (2S,4S)-4-hydroxy-2,3,4,5-tetrahydrodipicolinate + NADH + H(+). It catalyses the reaction (S)-2,3,4,5-tetrahydrodipicolinate + NADP(+) + H2O = (2S,4S)-4-hydroxy-2,3,4,5-tetrahydrodipicolinate + NADPH + H(+). Its pathway is amino-acid biosynthesis; L-lysine biosynthesis via DAP pathway; (S)-tetrahydrodipicolinate from L-aspartate: step 4/4. Functionally, catalyzes the conversion of 4-hydroxy-tetrahydrodipicolinate (HTPA) to tetrahydrodipicolinate. The polypeptide is 4-hydroxy-tetrahydrodipicolinate reductase (Clavibacter michiganensis subsp. michiganensis (strain NCPPB 382)).